We begin with the raw amino-acid sequence, 272 residues long: Orotidine 5'-phosphate decarboxylase (272 aa).

The active-site Proton donor is Lys95.

Belongs to the OMP decarboxylase family. Type 2 subfamily.

It carries out the reaction orotidine 5'-phosphate + H(+) = UMP + CO2. It participates in pyrimidine metabolism; UMP biosynthesis via de novo pathway; UMP from orotate: step 2/2. The protein is Orotidine 5'-phosphate decarboxylase of Cupriavidus necator (strain ATCC 17699 / DSM 428 / KCTC 22496 / NCIMB 10442 / H16 / Stanier 337) (Ralstonia eutropha).